The following is a 425-amino-acid chain: Serine hydroxymethyltransferase (425 aa).

(6S)-5,6,7,8-tetrahydrofolate contacts are provided by residues L125 and 129–131 (GHL). K234 carries the N6-(pyridoxal phosphate)lysine modification.

The protein belongs to the SHMT family. As to quaternary structure, homodimer. Pyridoxal 5'-phosphate serves as cofactor.

The protein localises to the cytoplasm. The catalysed reaction is (6R)-5,10-methylene-5,6,7,8-tetrahydrofolate + glycine + H2O = (6S)-5,6,7,8-tetrahydrofolate + L-serine. Its pathway is one-carbon metabolism; tetrahydrofolate interconversion. The protein operates within amino-acid biosynthesis; glycine biosynthesis; glycine from L-serine: step 1/1. In terms of biological role, catalyzes the reversible interconversion of serine and glycine with tetrahydrofolate (THF) serving as the one-carbon carrier. This reaction serves as the major source of one-carbon groups required for the biosynthesis of purines, thymidylate, methionine, and other important biomolecules. Also exhibits THF-independent aldolase activity toward beta-hydroxyamino acids, producing glycine and aldehydes, via a retro-aldol mechanism. The chain is Serine hydroxymethyltransferase from Marinomonas sp. (strain MWYL1).